The sequence spans 316 residues: Porphobilinogen deaminase (316 aa).

Position 240 is an S-(dipyrrolylmethanemethyl)cysteine (cysteine 240).

It belongs to the HMBS family. As to quaternary structure, monomer. Dipyrromethane is required as a cofactor.

It carries out the reaction 4 porphobilinogen + H2O = hydroxymethylbilane + 4 NH4(+). It functions in the pathway porphyrin-containing compound metabolism; protoporphyrin-IX biosynthesis; coproporphyrinogen-III from 5-aminolevulinate: step 2/4. Functionally, tetrapolymerization of the monopyrrole PBG into the hydroxymethylbilane pre-uroporphyrinogen in several discrete steps. The polypeptide is Porphobilinogen deaminase (Alkaliphilus metalliredigens (strain QYMF)).